The following is a 951-amino-acid chain: Ethylene-overproduction protein 1 (951 aa).

Positions 15–52 are disordered; it reads VYALNPSAPTPPPPPGNSSTGGGGGGGSGGGTGGVGDK. Positions 33–50 are enriched in gly residues; that stretch reads STGGGGGGGSGGGTGGVG. The BTB domain maps to 242-342; that stretch reads YDMSFCIGDE…ACDSHLAHLV (101 aa). TPR repeat units follow at residues 443-476, 539-572, 573-605, 698-731, 772-805, 807-837, 868-901, and 903-934; these read QLAYHQLGVVMLERKEYKDAQRWFNAAVEAGHLY, TFPYKFRAVALVEENQFGAAIAELNKILGFKASP, DCLEMRAWISIGMEDYEGALKDIRALLTLEPNF, HERLVYEGWILYDTGHREEALAKAEESISIQRSF, GQALNNLGSVYVDCEKLDLAADCYTNALTIKHTR, HQGLARVYHLKNQRKAAYDEMTKLIEKAQNN, TYPYRYRAAVLMDDHKESEAIDELSRAISFKPDL, and LLHLRAAFYDSMGEGASAIKDCEAALCIDPGH. Positions 815 to 854 form a coiled coil; sequence HLKNQRKAAYDEMTKLIEKAQNNASAYEKRSEYCDREMAQ.

This sequence belongs to the ETO1 family. In terms of assembly, interacts with the C-terminal domain of ACS4, ACS5 and ACS9. Interacts with CUL3A. Putative component of a ubiquitin ligase complex containing CUL3. As to expression, predominantly expressed in flowers.

The protein operates within protein modification; protein ubiquitination. Essential regulator of the ethylene pathway, which acts by regulating the stability of 1-aminocyclopropane-1-carboxylate synthase (ACS) enzymes. May act as a substrate-specific adapter that connects ACS enzymes, such as ACS5, to ubiquitin ligase complexes, leading to proteasomal degradation of ACS enzymes. The sequence is that of Ethylene-overproduction protein 1 (ETO1) from Arabidopsis thaliana (Mouse-ear cress).